A 371-amino-acid polypeptide reads, in one-letter code: 4-hydroxy-3-methylbut-2-en-1-yl diphosphate synthase (flavodoxin) (371 aa).

[4Fe-4S] cluster is bound by residues C270, C273, C305, and E312.

Belongs to the IspG family. The cofactor is [4Fe-4S] cluster.

It catalyses the reaction (2E)-4-hydroxy-3-methylbut-2-enyl diphosphate + oxidized [flavodoxin] + H2O + 2 H(+) = 2-C-methyl-D-erythritol 2,4-cyclic diphosphate + reduced [flavodoxin]. It participates in isoprenoid biosynthesis; isopentenyl diphosphate biosynthesis via DXP pathway; isopentenyl diphosphate from 1-deoxy-D-xylulose 5-phosphate: step 5/6. Functionally, converts 2C-methyl-D-erythritol 2,4-cyclodiphosphate (ME-2,4cPP) into 1-hydroxy-2-methyl-2-(E)-butenyl 4-diphosphate. The polypeptide is 4-hydroxy-3-methylbut-2-en-1-yl diphosphate synthase (flavodoxin) (Shewanella sp. (strain W3-18-1)).